Reading from the N-terminus, the 109-residue chain is MEVTAKLRGAAISAQKVRLVADEVRGKSIERALDILTYSNKKGAVFVKKCLNSAIANAENNNGLDIDTLKVSTIYVDEGITLKRILPRAKGRADRISKRTCHITIKVGE.

Belongs to the universal ribosomal protein uL22 family. In terms of assembly, part of the 50S ribosomal subunit.

Functionally, this protein binds specifically to 23S rRNA; its binding is stimulated by other ribosomal proteins, e.g. L4, L17, and L20. It is important during the early stages of 50S assembly. It makes multiple contacts with different domains of the 23S rRNA in the assembled 50S subunit and ribosome. The globular domain of the protein is located near the polypeptide exit tunnel on the outside of the subunit, while an extended beta-hairpin is found that lines the wall of the exit tunnel in the center of the 70S ribosome. The chain is Large ribosomal subunit protein uL22 from Psychrobacter cryohalolentis (strain ATCC BAA-1226 / DSM 17306 / VKM B-2378 / K5).